The primary structure comprises 239 residues: Transcription factor MYB10 (239 aa).

2 consecutive HTH myb-type domains span residues 11-63 (KSQV…INYL) and 64-118 (RPGL…KKRL). 2 DNA-binding regions (H-T-H motif) span residues 39 to 63 (WRSL…INYL) and 91 to 114 (WSKI…NTHL).

Expressed in cauline leaves and siliques.

The protein localises to the nucleus. Its function is as follows. Involved in metal ions homeostasis, including iron ions (Fe) acquisition, via the regulation of NAS4 and NAS2 genes expression. Necessary for plant survival in alkaline soil where iron availability is greatly restricted. Triggers tolerance to nickel (Ni) and zinc (Zn) ions. This is Transcription factor MYB10 from Arabidopsis thaliana (Mouse-ear cress).